The primary structure comprises 349 residues: Phosphoribosylformylglycinamidine cyclo-ligase (349 aa).

This sequence belongs to the AIR synthase family.

It is found in the cytoplasm. The enzyme catalyses 2-formamido-N(1)-(5-O-phospho-beta-D-ribosyl)acetamidine + ATP = 5-amino-1-(5-phospho-beta-D-ribosyl)imidazole + ADP + phosphate + H(+). It participates in purine metabolism; IMP biosynthesis via de novo pathway; 5-amino-1-(5-phospho-D-ribosyl)imidazole from N(2)-formyl-N(1)-(5-phospho-D-ribosyl)glycinamide: step 2/2. This chain is Phosphoribosylformylglycinamidine cyclo-ligase, found in Bordetella petrii (strain ATCC BAA-461 / DSM 12804 / CCUG 43448).